The chain runs to 157 residues: S-ribosylhomocysteine lyase (157 aa).

Residues H53, H57, and C124 each contribute to the Fe cation site.

Belongs to the LuxS family. In terms of assembly, homodimer. The cofactor is Fe cation.

The catalysed reaction is S-(5-deoxy-D-ribos-5-yl)-L-homocysteine = (S)-4,5-dihydroxypentane-2,3-dione + L-homocysteine. In terms of biological role, involved in the synthesis of autoinducer 2 (AI-2) which is secreted by bacteria and is used to communicate both the cell density and the metabolic potential of the environment. The regulation of gene expression in response to changes in cell density is called quorum sensing. Catalyzes the transformation of S-ribosylhomocysteine (RHC) to homocysteine (HC) and 4,5-dihydroxy-2,3-pentadione (DPD). This chain is S-ribosylhomocysteine lyase, found in Borreliella afzelii (strain PKo) (Borrelia afzelii).